A 276-amino-acid chain; its full sequence is Putative inactive ferrous iron permease EfeU (276 aa).

A topological domain (periplasmic) is located at residue Met-1. The helical transmembrane segment at 2-22 (FVPFLIMLREGLEAALIVSLI) threads the bilayer. Residues 23-35 (ASYLKRTQRGMXD) lie on the Cytoplasmic side of the membrane. Residues 36–56 (CVMWIGVLLAAALCLGLGIFI) traverse the membrane as a helical segment. Residues 57–69 (NETTGEFPQKEQE) are Periplasmic-facing. A helical membrane pass occupies residues 70–90 (LFEGIVAVIAVVILTWMVFWM). Topologically, residues 91–118 (RKVSRNVKVQLEQAVDSALQRGNHHGWA) are cytoplasmic. The helical transmembrane segment at 119–139 (LVMMVFFAVAREGLESVFFLL) threads the bilayer. At 140–147 (AAFQQDVG) the chain is on the periplasmic side. Residues 148–168 (IWPPLGAMLGLATAVVLGFLL) form a helical membrane-spanning segment. Residues 169-179 (YWGGIRLNLGA) are Cytoplasmic-facing. The helical transmembrane segment at 180 to 200 (FFKWTSLFILFVAAGLAAGAI) threads the bilayer. Over 201 to 244 (RAFHEAGLWNHFQEIAFDMSAVLSTHSLFGTLMEGIFGYQEAPS) the chain is Periplasmic. The helical transmembrane segment at 245–265 (VSEVAVWFIYLIPALVAFALP) threads the bilayer. Residues 266 to 276 (PRAGATASRSA) are Cytoplasmic-facing.

It belongs to the oxidase-dependent Fe transporter (OFeT) (TC 9.A.10.1) family. Part of a ferrous iron transporter composed of EfeU, EfeO and EfeB. However, this EfeUOB tripartite iron transporter is defective in E.coli strain K12 due to a frameshift mutation in EfeU.

It is found in the cell inner membrane. In Escherichia coli (strain K12), this protein is Putative inactive ferrous iron permease EfeU (efeU).